We begin with the raw amino-acid sequence, 1059 residues long: Nonsense-mediated mRNA decay factor SMG7 (1059 aa).

TPR repeat units follow at residues 149-183 and 184-217; these read DQQS…LGDL and ARYK…WPAS. The segment covering 806–817 has biased composition (polar residues); the sequence is SHVSPAHSQSTS. 4 disordered regions span residues 806-826, 927-955, 987-1015, and 1040-1059; these read SHVS…KWSP, HLGP…SGNN, SGKP…QVPT, and STQL…RHFV.

As to quaternary structure, interacts with EXA1. Expressed in flowers and at lower levels in stems and leaves.

The protein resides in the cytoplasm. Its subcellular location is the P-body. Plays multiple roles in growth and development. Involved in nonsense-mediated mRNA decay (NMD). May provide a link to the mRNA degradation machinery to initiate NMD and serve as an adapter for UPF proteins function. Required for meiotic progression through anaphase II of pollen mother cells. May counteract cyclin-dependent kinase (CDK) activity at the end of meiosis. May play a role in plant defense through its involvement in NMD. Together with EXA1, helps to restrict cell death induction during pathogen infection in a salicylic acid- (SA) and reactive oxygen species- (ROS) independent manner. The sequence is that of Nonsense-mediated mRNA decay factor SMG7 from Arabidopsis thaliana (Mouse-ear cress).